The primary structure comprises 340 residues: Protein SSUH2 homolog (340 aa).

The span at 1-11 (MDRDPSEEDSM) shows a compositional bias: acidic residues. A disordered region spans residues 1–20 (MDRDPSEEDSMADLSFEAES).

As to expression, widely expressed, with highest levels in the liver, intestine, tongue and underjaw.

Its subcellular location is the cytoplasm. It localises to the nucleus. In terms of biological role, plays a role in odontogenesis. The sequence is that of Protein SSUH2 homolog from Mus musculus (Mouse).